Here is a 152-residue protein sequence, read N- to C-terminus: Lipoprotein signal peptidase (152 aa).

The next 2 helical transmembrane spans lie at asparagine 55–methionine 75 and leucine 85–phenylalanine 105. Active-site residues include aspartate 111 and aspartate 129. A helical transmembrane segment spans residues valine 124–valine 144.

The protein belongs to the peptidase A8 family.

It is found in the cell membrane. The enzyme catalyses Release of signal peptides from bacterial membrane prolipoproteins. Hydrolyzes -Xaa-Yaa-Zaa-|-(S,diacylglyceryl)Cys-, in which Xaa is hydrophobic (preferably Leu), and Yaa (Ala or Ser) and Zaa (Gly or Ala) have small, neutral side chains.. It functions in the pathway protein modification; lipoprotein biosynthesis (signal peptide cleavage). This protein specifically catalyzes the removal of signal peptides from prolipoproteins. This chain is Lipoprotein signal peptidase, found in Bacillus mycoides (strain KBAB4) (Bacillus weihenstephanensis).